The following is a 748-amino-acid chain: Formate acetyltransferase (748 aa).

A PFL domain is found at 5–618 (NNHTNAWQGF…KTGNTPDGRK (614 aa)). Residue Cys-412 is the S-acetylcysteine intermediate of the active site. Cys-413 functions as the Cysteine radical intermediate in the catalytic mechanism. Residues 625–748 (PGANPMHGRD…VISRTFHESM (124 aa)) form the Glycine radical domain. Gly-723 is modified (glycine radical).

Belongs to the glycyl radical enzyme (GRE) family. PFL subfamily. Homodimer.

The protein resides in the cytoplasm. The catalysed reaction is formate + acetyl-CoA = pyruvate + CoA. The protein operates within fermentation; pyruvate fermentation; formate from pyruvate: step 1/1. Functionally, catalyzes the conversion of pyruvate to formate and acetyl-CoA. This is Formate acetyltransferase (pflB) from Staphylococcus epidermidis (strain ATCC 12228 / FDA PCI 1200).